The following is a 236-amino-acid chain: Hydroxyacylglutathione hydrolase (236 aa).

Zn(2+) contacts are provided by His-52, His-54, Asp-56, His-57, His-108, Asp-125, and His-163.

It belongs to the metallo-beta-lactamase superfamily. Glyoxalase II family. In terms of assembly, monomer. Requires Zn(2+) as cofactor.

It carries out the reaction an S-(2-hydroxyacyl)glutathione + H2O = a 2-hydroxy carboxylate + glutathione + H(+). Its pathway is secondary metabolite metabolism; methylglyoxal degradation; (R)-lactate from methylglyoxal: step 2/2. Its function is as follows. Thiolesterase that catalyzes the hydrolysis of S-D-lactoyl-glutathione to form glutathione and D-lactic acid. This Mannheimia succiniciproducens (strain KCTC 0769BP / MBEL55E) protein is Hydroxyacylglutathione hydrolase.